The primary structure comprises 172 residues: MTVVVISGPPGSGKSTVAKKLASELGLRFVSAGSVFRKLAEEIGVSLLELNEMALKDPEIDLRIDRMVLEEARRGNVVIEAHLGGWVAAPYADVNVYLTAPLEERAKRIARRDGISYEEALEEILSREEVQWIRFRKLYGFDVASLEIFDLVVNTALMGPEAVVETIKRMLL.

An ATP-binding site is contributed by 8–16; the sequence is GPPGSGKST.

This sequence belongs to the cytidylate kinase family. Type 2 subfamily.

The protein resides in the cytoplasm. The catalysed reaction is CMP + ATP = CDP + ADP. It carries out the reaction dCMP + ATP = dCDP + ADP. In Ignicoccus hospitalis (strain KIN4/I / DSM 18386 / JCM 14125), this protein is Cytidylate kinase.